Reading from the N-terminus, the 1041-residue chain is FHIP family protein GF15501 (1041 aa).

Disordered stretches follow at residues 797–856 and 907–987; these read RKGN…NKRR and SNSS…SEPV. Serine 803 is modified (phosphoserine). Residues 808–824 show a composition bias toward low complexity; the sequence is NLQQQQALNPAQQQGQQ. Composition is skewed to polar residues over residues 825–843 and 907–933; these read RSAY…TPTS and SNSS…LSTQ. Low complexity predominate over residues 942–973; it reads SGSSSNSSMGGSSQTLSAHSNATTTHSSSTLH.

It belongs to the FHIP family.

The protein is FHIP family protein GF15501 of Drosophila ananassae (Fruit fly).